We begin with the raw amino-acid sequence, 140 residues long: CDGSH iron-sulfur domain-containing protein 2 homolog (140 aa).

At 1 to 35 the chain is on the lumenal side; it reads MEAIAKLIKVQLPNYLQKLPVPSSLSGFAELSPSD. A helical transmembrane segment spans residues 36-59; the sequence is AIAVVFPFAVVSWLIGYSTYKFFQ. At 60-140 the chain is on the cytoplasmic side; the sequence is PKAVELPPSP…GPLIVKGKAN (81 aa). [2Fe-2S] cluster is bound by residues C104, C106, C115, and H119.

The protein belongs to the CISD protein family. CISD2 subfamily. Requires [2Fe-2S] cluster as cofactor.

The protein resides in the endoplasmic reticulum membrane. This Trichoplax adhaerens (Trichoplax reptans) protein is CDGSH iron-sulfur domain-containing protein 2 homolog.